A 422-amino-acid chain; its full sequence is uncharacterized protein (422 aa).

Phosphoserine occurs at positions 124, 126, and 151. The disordered stretch occupies residues threonine 144–lysine 166. Lysine 250 participates in a covalent cross-link: Glycyl lysine isopeptide (Lys-Gly) (interchain with G-Cter in SUMO2). Disordered regions lie at residues alanine 251–serine 285 and glycine 299–alanine 324. Acidic residues predominate over residues glutamate 271–asparagine 282. A phosphoserine mark is found at serine 280 and serine 306. Residues alanine 310–alanine 324 show a composition bias toward low complexity. Serine 351 is subject to Phosphoserine.

This is an uncharacterized protein from Homo sapiens (Human).